A 1948-amino-acid chain; its full sequence is Receptor-type tyrosine-protein phosphatase S (1948 aa).

Positions 1 to 29 (MAPTWGPGMVSVVGPMGLLVVLLVGGCAA) are cleaved as a signal peptide. At 30-1282 (EEPPRFIKEP…PQPIVDGEEG (1253 aa)) the chain is on the extracellular side. Ig-like C2-type domains lie at 33-123 (PRFI…AKLT), 135-233 (PNID…ANLY), and 245-327 (PRFS…AQIT). Intrachain disulfides connect cysteine 54/cysteine 107 and cysteine 156/cysteine 216. An important for binding to glycosaminoglycan chains region spans residues 68–72 (KKGKK). Asparagine 263 and asparagine 308 each carry an N-linked (GlcNAc...) asparagine glycan. An intrachain disulfide couples cysteine 266 to cysteine 311. Fibronectin type-III domains lie at 334–424 (APGT…TGEQ), 429–523 (APRN…TQQG), 527–616 (QPMN…TLQS), 621–718 (PPQD…TDED), 723–831 (PPRK…TKGA), 832–930 (VLGR…TPRG), 931–1033 (HPQI…FLRD), and 1036–1120 (SPKN…TAFN). The tract at residues 700–724 (TEVGPGPESSPVVVRTDEDVPSAPP) is disordered. The span at 701 to 713 (EVGPGPESSPVVV) shows a compositional bias: low complexity. An N-linked (GlcNAc...) asparagine glycan is attached at asparagine 733. N-linked (GlcNAc...) asparagine glycosylation is present at asparagine 940. The chain crosses the membrane as a helical span at residues 1283 to 1303 (LIWVIGPVLAVVFIICIVIAI). Topologically, residues 1304-1948 (LLYKNKPDSK…YLGSFDHYAT (645 aa)) are cytoplasmic. Composition is skewed to basic and acidic residues over residues 1311 to 1321 (DSKRKDSEPRT) and 1331 to 1340 (APHHPKDPVE). The tract at residues 1311–1340 (DSKRKDSEPRTKCLLNNADLAPHHPKDPVE) is disordered. Tyrosine-protein phosphatase domains follow at residues 1393–1648 (LSQE…LLEA) and 1680–1939 (MELE…ALEY). Substrate-binding positions include aspartate 1557, 1589–1595 (CSAGVGR), and glutamine 1633. The active-site Phosphocysteine intermediate is cysteine 1589. Cysteine 1880 (phosphocysteine intermediate) is an active-site residue.

The protein belongs to the protein-tyrosine phosphatase family. Receptor class 2A subfamily. In terms of assembly, binding to large heparan sulfate proteoglycan structures promotes oligomerization. Binding to chondroitin sulfate proteoglycan does not lead to oligomerization. Interacts (via Ig-like domains) with NTRK3. Interacts (via Ig-like domains) with NTRK1, but does not form detectable complexes with NTRK2. Interacts with PPFIA1, PPFIA2 and PPFIA3. A cleavage occurs, separating the extracellular domain from the transmembrane segment. This process called 'ectodomain shedding' is thought to be involved in receptor desensitization, signal transduction and/or membrane localization. In terms of tissue distribution, detected in peripheral blood plasmacytoid dendritic cells (at protein level). Detected in all tissues tested except for placenta and liver. Detected in peripheral blood plasmacytoid dendritic cells.

It localises to the cell membrane. Its subcellular location is the cell projection. The protein localises to the axon. The protein resides in the perikaryon. It is found in the cytoplasmic vesicle. It localises to the secretory vesicle. Its subcellular location is the synaptic vesicle membrane. The protein localises to the synapse. The protein resides in the synaptosome. It is found in the postsynaptic density. It localises to the neuron projection. Its subcellular location is the growth cone. The catalysed reaction is O-phospho-L-tyrosyl-[protein] + H2O = L-tyrosyl-[protein] + phosphate. Functionally, cell surface receptor that binds to glycosaminoglycans, including chondroitin sulfate proteoglycans and heparan sulfate proteoglycan. Binding to chondroitin sulfate and heparan sulfate proteoglycans has opposite effects on PTPRS oligomerization and regulation of neurite outgrowth. Contributes to the inhibition of neurite and axonal outgrowth by chondroitin sulfate proteoglycans, also after nerve transection. Plays a role in stimulating neurite outgrowth in response to the heparan sulfate proteoglycan GPC2. Required for normal brain development, especially for normal development of the pituitary gland and the olfactory bulb. Functions as a tyrosine phosphatase. Mediates dephosphorylation of NTRK1, NTRK2 and NTRK3. Plays a role in down-regulation of signaling cascades that lead to the activation of Akt and MAP kinases. Down-regulates TLR9-mediated activation of NF-kappa-B, as well as production of TNF, interferon alpha and interferon beta. The polypeptide is Receptor-type tyrosine-protein phosphatase S (PTPRS) (Homo sapiens (Human)).